A 559-amino-acid chain; its full sequence is Sulfite reductase [NADPH] hemoprotein beta-component (559 aa).

[4Fe-4S] cluster-binding residues include cysteine 423, cysteine 429, cysteine 468, and cysteine 472. Position 472 (cysteine 472) interacts with siroheme.

The protein belongs to the nitrite and sulfite reductase 4Fe-4S domain family. In terms of assembly, alpha(8)-beta(8). The alpha component is a flavoprotein, the beta component is a hemoprotein. The cofactor is siroheme. [4Fe-4S] cluster serves as cofactor.

It carries out the reaction hydrogen sulfide + 3 NADP(+) + 3 H2O = sulfite + 3 NADPH + 4 H(+). It functions in the pathway sulfur metabolism; hydrogen sulfide biosynthesis; hydrogen sulfide from sulfite (NADPH route): step 1/1. Functionally, component of the sulfite reductase complex that catalyzes the 6-electron reduction of sulfite to sulfide. This is one of several activities required for the biosynthesis of L-cysteine from sulfate. The chain is Sulfite reductase [NADPH] hemoprotein beta-component from Thiocapsa roseopersicina.